The sequence spans 439 residues: Innexin-19 (439 aa).

Helical transmembrane passes span 33–53, 103–123, 199–219, and 285–305; these read PLIL…GTPI, QWVP…CIFW, IVYS…FFIL, and VFAF…CSFI.

It belongs to the pannexin family.

It localises to the cell membrane. Its subcellular location is the cell junction. The protein localises to the gap junction. Functionally, structural component of the gap junctions that specifically coordinates left-right asymmetry in the developing nervous system. Acts by forming gap junction network linking embryonic neurons and providing electrical coupling between cells, leading to promote or inhibit AWC signaling. The protein is Innexin-19 (inx-19) of Caenorhabditis briggsae.